Here is a 392-residue protein sequence, read N- to C-terminus: Protein-glutamate methylesterase/protein-glutamine glutaminase (392 aa).

The Response regulatory domain maps to Thr9–Asp126. The residue at position 60 (Asp60) is a 4-aspartylphosphate. Residues Val148–Gly194 form a disordered region. The span at Leu173 to Ser185 shows a compositional bias: low complexity. The region spanning Pro198–Arg392 is the CheB-type methylesterase domain. Active-site residues include Ser210, His237, and Asp334.

The protein belongs to the CheB family. Post-translationally, phosphorylated by CheA. Phosphorylation of the N-terminal regulatory domain activates the methylesterase activity.

The protein resides in the cytoplasm. The catalysed reaction is [protein]-L-glutamate 5-O-methyl ester + H2O = L-glutamyl-[protein] + methanol + H(+). The enzyme catalyses L-glutaminyl-[protein] + H2O = L-glutamyl-[protein] + NH4(+). In terms of biological role, involved in chemotaxis. Part of a chemotaxis signal transduction system that modulates chemotaxis in response to various stimuli. Catalyzes the demethylation of specific methylglutamate residues introduced into the chemoreceptors (methyl-accepting chemotaxis proteins or MCP) by CheR. Also mediates the irreversible deamidation of specific glutamine residues to glutamic acid. The polypeptide is Protein-glutamate methylesterase/protein-glutamine glutaminase (Desulfitobacterium hafniense (strain Y51)).